A 240-amino-acid polypeptide reads, in one-letter code: 2,3,4,5-tetrahydropyridine-2,6-dicarboxylate N-acetyltransferase (240 aa).

Belongs to the transferase hexapeptide repeat family. DapH subfamily.

It catalyses the reaction (S)-2,3,4,5-tetrahydrodipicolinate + acetyl-CoA + H2O = L-2-acetamido-6-oxoheptanedioate + CoA. It participates in amino-acid biosynthesis; L-lysine biosynthesis via DAP pathway; LL-2,6-diaminopimelate from (S)-tetrahydrodipicolinate (acetylase route): step 1/3. In terms of biological role, catalyzes the transfer of an acetyl group from acetyl-CoA to tetrahydrodipicolinate. This chain is 2,3,4,5-tetrahydropyridine-2,6-dicarboxylate N-acetyltransferase, found in Bacillus mycoides (strain KBAB4) (Bacillus weihenstephanensis).